The following is a 301-amino-acid chain: Cuticle collagen 2 (301 aa).

An N-terminal signal peptide occupies residues 1–37 (MDIDARIKAYKFVAYSAVTFSVVAVVSVFITLPMVYN). 4 triple-helical region regions span residues 105-134 (GPPG…PGKG), 153-176 (GPPG…PGSP), 183-212 (GPAG…PGAS), and 215-282 (GGPG…KGIC). Residues 109–284 (PGGSPGKPGK…GEGEKGICPK (176 aa)) are disordered. 2 stretches are compositionally biased toward pro residues: residues 143–170 (TQPP…PGPD) and 179–191 (PSGP…PGPA). Residues 201 to 218 (GAPGGPGEPGASEQGGPG) are compositionally biased toward gly residues. Over residues 219–229 (EPGPAGPPGPA) the composition is skewed to pro residues. Low complexity predominate over residues 252-261 (PGAAGAPGAD). Residues 262 to 274 (GNPGGPGTAGKPG) are compositionally biased toward gly residues.

Belongs to the cuticular collagen family. In terms of assembly, collagen polypeptide chains are complexed within the cuticle by disulfide bonds and other types of covalent cross-links. Syncytial dorsal and ventral epidermis.

Functionally, nematode cuticles are composed largely of collagen-like proteins. The cuticle functions both as an exoskeleton and as a barrier to protect the worm from its environment. In Caenorhabditis elegans, this protein is Cuticle collagen 2 (col-2).